The chain runs to 365 residues: Phosphoserine aminotransferase (365 aa).

Position 46 (R46) interacts with L-glutamate. Residues 80 to 81 (AT), W106, T157, D177, and Q200 contribute to the pyridoxal 5'-phosphate site. N6-(pyridoxal phosphate)lysine is present on K201. 242 to 243 (NT) provides a ligand contact to pyridoxal 5'-phosphate.

This sequence belongs to the class-V pyridoxal-phosphate-dependent aminotransferase family. SerC subfamily. In terms of assembly, homodimer. Pyridoxal 5'-phosphate serves as cofactor.

Its subcellular location is the cytoplasm. It catalyses the reaction O-phospho-L-serine + 2-oxoglutarate = 3-phosphooxypyruvate + L-glutamate. The enzyme catalyses 4-(phosphooxy)-L-threonine + 2-oxoglutarate = (R)-3-hydroxy-2-oxo-4-phosphooxybutanoate + L-glutamate. Its pathway is amino-acid biosynthesis; L-serine biosynthesis; L-serine from 3-phospho-D-glycerate: step 2/3. The protein operates within cofactor biosynthesis; pyridoxine 5'-phosphate biosynthesis; pyridoxine 5'-phosphate from D-erythrose 4-phosphate: step 3/5. Its function is as follows. Catalyzes the reversible conversion of 3-phosphohydroxypyruvate to phosphoserine and of 3-hydroxy-2-oxo-4-phosphonooxybutanoate to phosphohydroxythreonine. This chain is Phosphoserine aminotransferase, found in Leptospira biflexa serovar Patoc (strain Patoc 1 / Ames).